A 335-amino-acid polypeptide reads, in one-letter code: Autophagy-related protein 21 (335 aa).

2 WD repeats span residues C165–E205 and Y210–N249.

The protein belongs to the WD repeat PROPPIN family.

The protein resides in the cytoplasm. The protein localises to the golgi apparatus. It is found in the golgi stack membrane. It localises to the vacuole membrane. Its subcellular location is the preautophagosomal structure membrane. In terms of biological role, required for cytoplasm to vacuole transport (Cvt) vesicles formation and autophagy. Has a role in sporulation. This is Autophagy-related protein 21 (mug179) from Schizosaccharomyces pombe (strain 972 / ATCC 24843) (Fission yeast).